Consider the following 231-residue polypeptide: MSRLTKQQILEQLKNGLIASCQPVDDGPMDSPEIVAAMAKASVIGGAAGLRIEGIDNLKAVRKVVDVPIVGIVKRDLPDSPVRITPFLQDIDDLYHAGADIIAFDGTDRVRPTTIEACARRIQELGAMSMADCSNYKEGMYCQELGVDLIGSTMSGYTGGETPDEPDVQLVRDLVASGCRVMAEGRYNTPELAAVAIENGAYAVTVGSALTRLEHIVSWFVTAIDDRKTGA.

The protein belongs to the NanE family.

The catalysed reaction is an N-acyl-D-glucosamine 6-phosphate = an N-acyl-D-mannosamine 6-phosphate. It functions in the pathway amino-sugar metabolism; N-acetylneuraminate degradation; D-fructose 6-phosphate from N-acetylneuraminate: step 3/5. Its function is as follows. Converts N-acetylmannosamine-6-phosphate (ManNAc-6-P) to N-acetylglucosamine-6-phosphate (GlcNAc-6-P). This chain is Putative N-acetylmannosamine-6-phosphate 2-epimerase, found in Glaesserella parasuis serovar 5 (strain SH0165) (Haemophilus parasuis).